Consider the following 271-residue polypeptide: MKRNERLVDFTNFLINHPNQMLNLNELSKHYEVAKSSISEDLVFIKRVFENQGVGLVETFPGSLGGVRFTPYITDERSLEMSQEIAELLREENRILPGGYIYLSDILGTPSNLRKIGQIIAHEYHEKQVDVVMTIATKGIPIAQSVAEILDVPFVIVRRDPKVTEGATLNVNYMSGSSSRVENMTLSKRSLSIGQNVLIVDDFMKGAGTINGMRSLVHEFDCLLAGVAVFLEGPFKGERLIDDYKSILKVDRIDIANRSIDVQLGNIFNDK.

A DNA binding domain region spans residues 1–71; sequence MKRNERLVDF…GSLGGVRFTP (71 aa). An effector binding domain region spans residues 72–271; that stretch reads YITDERSLEM…VQLGNIFNDK (200 aa).

This sequence belongs to the purine/pyrimidine phosphoribosyltransferase family. PurR subfamily. As to quaternary structure, homodimer.

DNA-binding transcriptional activator that controls the expression of a number of genes involved in the synthesis, metabolism and transport of purines. This chain is Purine biosynthesis transcriptional activator PurR (purR), found in Lactococcus lactis subsp. lactis (strain IL1403) (Streptococcus lactis).